A 1674-amino-acid chain; its full sequence is Kinesin-like protein KIF21A (1674 aa).

Met1 carries the post-translational modification N-acetylmethionine. The Kinesin motor domain occupies 9–371 (SVRVAVRIRP…LKYANRARNI (363 aa)). An ATP-binding site is contributed by 88 to 95 (GQTGAGKT). Residues 365-575 (ANRARNIKNK…NREERSVAGK (211 aa)) are a coiled coil. Ser524 bears the Phosphoserine mark. Disordered regions lie at residues 556 to 641 (KKRL…DEKA), 779 to 804 (EEQEKARLTESRRNREIAQLKKDQRK), and 841 to 881 (SDKV…AQQK). Positions 560–597 (QKLEESNREERSVAGKEDNTDTDQEKKEEKGVSERENN) are enriched in basic and acidic residues. The segment covering 598 to 637 (ELEVEESQEVSDHEDEEEEEEEEEDDIDGGESSDESDSES) has biased composition (acidic residues). Over residues 851-865 (KLSSSDAPAQDTGSS) the composition is skewed to polar residues. 2 coiled-coil regions span residues 931-1019 (TDII…AKEE) and 1053-1083 (LQAAQKEAQIKVLEGRLKQTEITSATQNQLL). The interval 1116–1138 (VEDSTDEDAPLNSPGSEGSTLSS) is disordered. Residues 1128-1138 (SPGSEGSTLSS) show a composition bias toward polar residues. The interval 1146–1167 (EVKPKNKARRRTTTQMELLYAD) is interaction with KANK1 and KANK2. Polar residues-rich tracts occupy residues 1170-1179 (ELASDTSTGD) and 1196-1205 (GMNTETSGTS). The interval 1170 to 1318 (ELASDTSTGD…SSLSEVHRSS (149 aa)) is disordered. A phosphoserine mark is found at Ser1212, Ser1225, Ser1229, and Ser1239. The span at 1245 to 1262 (KAYEKAEKSKAKEQKHSD) shows a compositional bias: basic and acidic residues. The segment covering 1288–1297 (NRLTVSQGNT) has biased composition (polar residues). WD repeat units follow at residues 1345–1382 (GHTKAVLCVDSTDDLLFTGSKDRTCKVWNLVTGQEIMS), 1385–1423 (GHPNNVVSVKYCNYTSLVFTVSTSYIKVWDIRDSAKCIR), 1449–1487 (SGENQINQIALNPTGTFLYAASGNAVRMWDLKRFQSTGK), 1490–1532 (GHLG…LGTV), 1541–1578 (PHYDGIEALTIQGDNLFSGSRDNGIKKWDLTQKDLLQQ), 1582–1621 (AHKDWVCALGVVPDHPVLLSGCRGGILKVWNMDTFMPVGE), and 1624–1661 (GHDSPINAICVNSTHIFTAADDRTVRIWKARNLQDGQI). Ser1662 carries the post-translational modification Phosphoserine. Thr1664 is subject to Phosphothreonine. Ser1673 is subject to Phosphoserine.

The protein belongs to the TRAFAC class myosin-kinesin ATPase superfamily. Kinesin family. Part of a cortical microtubule stabilization complex (CMSC) composed of KANK1, PPFIA1, PPFIBP1, ERC1/ELKS, PHLDB2/LL5beta, CLASPs, KIF21A and possibly additional interactors; within CMSCs KANK1 and PHLDB2/LL5beta seem to be the core components for recruiting microtubule-binding proteins KIF21A and CLASPs, whereas PPFIA1, PPFIBP1 and ERC1/ELKS serve as scaffolds for protein clustering. Interacts (via residues 1146-1167) with KANK1 (via ankyrin repeats 1-5) and KANK2 (via ankyrin repeats 1-5).

The protein localises to the cytoplasm. The protein resides in the cytoskeleton. It is found in the cell cortex. It localises to the cell projection. Its subcellular location is the axon. The protein localises to the dendrite. The protein resides in the growth cone. Processive microtubule plus-end directed motor protein involved in neuronal axon guidance. Is recruited by KANK1 to cortical microtubule stabilizing complexes (CMSCs) at focal adhesions (FAs) rims where it promotes microtubule capture and stability. Controls microtubule polymerization rate at axonal growth cones and suppresses microtubule growth without inducing microtubule disassembly once it reaches the cell cortex. This Homo sapiens (Human) protein is Kinesin-like protein KIF21A (KIF21A).